The following is a 213-amino-acid chain: Cytochrome c biogenesis ATP-binding export protein CcmA (213 aa).

One can recognise an ABC transporter domain in the interval 8 to 213 (LQATALTCER…RDIDLGQWAA (206 aa)). 40–47 (GPNGSGKT) contributes to the ATP binding site.

It belongs to the ABC transporter superfamily. CcmA exporter (TC 3.A.1.107) family. As to quaternary structure, the complex is composed of two ATP-binding proteins (CcmA) and two transmembrane proteins (CcmB).

It localises to the cell inner membrane. It carries out the reaction heme b(in) + ATP + H2O = heme b(out) + ADP + phosphate + H(+). Functionally, part of the ABC transporter complex CcmAB involved in the biogenesis of c-type cytochromes; once thought to export heme, this seems not to be the case, but its exact role is uncertain. Responsible for energy coupling to the transport system. The protein is Cytochrome c biogenesis ATP-binding export protein CcmA of Pseudomonas savastanoi pv. phaseolicola (strain 1448A / Race 6) (Pseudomonas syringae pv. phaseolicola (strain 1448A / Race 6)).